The sequence spans 66 residues: Hemicalcin (66 aa).

The N-terminal stretch at 1-21 (MRASLFIVIFVVSFITISCLS) is a signal peptide. Residues 22–33 (TDDEEARWIEKR) constitute a propeptide that is removed on maturation. Intrachain disulfides connect cysteine 36–cysteine 50, cysteine 43–cysteine 54, and cysteine 49–cysteine 65. The tract at residues 55–57 (KRR) is essential for stimulation of [3H]ryanodine binding to RYR1.

Belongs to the scorpion calcin family. In terms of tissue distribution, expressed by the venom gland.

The protein localises to the secreted. In terms of biological role, this toxin stabilizes ryanodine receptor 1 (RyR1) opening in a long-lasting subconductance state (20% and 38% of the full conductance state have been found). It promotes an increase in the opening probability at intermediate concentration. Furthermore, it triggers calcium release from sarcoplasmic vesicles (68 nM are enough to induce a sharp release, and 45% of the total calcium is released after toxin (100 nM) addition) probably by acting as a cell-penetrating peptide (CPP). In addition, it has been shown to dose-dependently stimulate ryanodine binding to RyR1 (EC(50)=6.9-71 nM). It also augments the bell-shaped calcium-[3H]ryanodine binding curve that is maximal at about 10 uM calcium concentration. It binds a different site as ryanodine. It acts synergistically with caffeine. In vivo, intracerebroventricular injection into mice induces neurotoxic symptoms, followed by death. In Hemiscorpius lepturus (Scorpion), this protein is Hemicalcin.